A 126-amino-acid polypeptide reads, in one-letter code: Protein C10 (126 aa).

Position 2 is an N-acetylalanine (alanine 2).

Belongs to the UPF0456 family. Ubiquitously expressed, with higher expression in lung and fetal brain.

The protein localises to the cytoplasm. Its function is as follows. In brain, may be required for corpus callosum development. The polypeptide is Protein C10 (C12orf57) (Homo sapiens (Human)).